Consider the following 167-residue polypeptide: Transcriptional repressor NrdR (167 aa).

A zinc finger spans residues 3–34 (CPFCRNPDSRVVDSRMADDGSAIRRRRQCPEC). The 91-residue stretch at 46-136 (LSVIKRSGVG…VYQAFESLED (91 aa)) folds into the ATP-cone domain. The interval 148–167 (AQEDAAERPATPRKPEKTSL) is disordered.

This sequence belongs to the NrdR family. The cofactor is Zn(2+).

Negatively regulates transcription of bacterial ribonucleotide reductase nrd genes and operons by binding to NrdR-boxes. This is Transcriptional repressor NrdR from Pseudarthrobacter chlorophenolicus (strain ATCC 700700 / DSM 12829 / CIP 107037 / JCM 12360 / KCTC 9906 / NCIMB 13794 / A6) (Arthrobacter chlorophenolicus).